We begin with the raw amino-acid sequence, 191 residues long: Inosine triphosphate pyrophosphatase (191 aa).

15 to 20 lines the ITP pocket; that stretch reads TGNTNK. Glutamate 43 provides a ligand contact to Mg(2+). ITP contacts are provided by residues lysine 55, 71-72, lysine 88, 147-150, lysine 168, and 173-174; these read DT, FGWD, and HR.

It belongs to the HAM1 NTPase family. In terms of assembly, homodimer. The cofactor is Mg(2+). Mn(2+) is required as a cofactor.

Its subcellular location is the cytoplasm. The protein resides in the nucleus. It carries out the reaction ITP + H2O = IMP + diphosphate + H(+). The enzyme catalyses dITP + H2O = dIMP + diphosphate + H(+). The catalysed reaction is XTP + H2O = XMP + diphosphate + H(+). Its function is as follows. Pyrophosphatase that hydrolyzes non-canonical purine nucleotides such as inosine triphosphate (ITP), deoxyinosine triphosphate (dITP) or xanthosine 5'-triphosphate (XTP) to their respective monophosphate derivatives. The enzyme does not distinguish between the deoxy- and ribose forms. Probably excludes non-canonical purines from RNA and DNA precursor pools, thus preventing their incorporation into RNA and DNA and avoiding chromosomal lesions. The polypeptide is Inosine triphosphate pyrophosphatase (Chaetomium globosum (strain ATCC 6205 / CBS 148.51 / DSM 1962 / NBRC 6347 / NRRL 1970) (Soil fungus)).